The sequence spans 210 residues: Rho-related GTP-binding protein RhoD (210 aa).

GTP is bound at residue 24-31 (GDGGCGKT). The Effector region motif lies at 46–54 (YSPTVFERY). GTP-binding positions include 71 to 75 (DTAGQ) and 129 to 132 (CKID). The residue at position 207 (cysteine 207) is a Cysteine methyl ester. Cysteine 207 is lipidated: S-geranylgeranyl cysteine. A propeptide spans 208-210 (LAT) (removed in mature form).

Belongs to the small GTPase superfamily. Rho family. Interacts with PAK5. Interacts (in GTP-bound form) with DAPK3, FILIP1 and WHAMM. Interacts (independent of GTP-loaded status) with ANKFY1. In terms of tissue distribution, widely expressed.

Its subcellular location is the cell membrane. The protein resides in the early endosome. In terms of biological role, involved in endosome dynamics. May coordinate membrane transport with the function of the cytoskeleton. Involved in the internalization and trafficking of activated tyrosine kinase receptors such as PDGFRB. Participates in the reorganization of actin cytoskeleton; the function seems to involve WHAMM and includes regulation of filopodia formation and actin filament bundling. Can modulate the effect of DAPK3 in reorganization of actin cytoskeleton and focal adhesion dissolution. The polypeptide is Rho-related GTP-binding protein RhoD (Rhod) (Mus musculus (Mouse)).